Reading from the N-terminus, the 1084-residue chain is Siderophore biosynthesis regulatory protein URBS1 (1084 aa).

Disordered regions lie at residues 1-164 (MALP…QSSS), 245-283 (AEEH…RDSY), and 300-337 (RPVH…AGMR). Residues 23–51 (QAAAASSSSSSSSSHHPPPRIAARPIAPA) are compositionally biased toward low complexity. 2 stretches are compositionally biased toward polar residues: residues 97 to 106 (SHHNASSTAT) and 128 to 141 (RSQS…NRSQ). Residues 150-164 (PSRSQPNSPLLQSSS) are compositionally biased toward low complexity. The span at 245–260 (AEEHAKMQRYSDEHPR) shows a compositional bias: basic and acidic residues. A GATA-type 1 zinc finger spans residues 338–362 (CSNCGVTSTPLWRRAPDGSTICNAC). 2 disordered regions span residues 372-405 (HRSA…REDD) and 442-472 (VSKR…KMDD). Residues 373-385 (RSASNRLSGSDAS) show a composition bias toward polar residues. The GATA-type 2 zinc finger occupies 482–506 (CTNCQTTTTPLWRRDEDGNNICNAC). Disordered stretches follow at residues 559 to 595 (IAPA…MREA), 643 to 679 (RAGA…DERD), 692 to 803 (THAA…TKLS), 841 to 940 (EAAG…SRRN), 953 to 1019 (AAVP…DDHW), and 1040 to 1084 (ARPV…APRT). 2 stretches are compositionally biased toward basic and acidic residues: residues 650–659 (RTSHPDDSRS) and 715–725 (RLGRSELHGES). The segment covering 752 to 781 (PHHHHHHHHHHANHASHAVHHGHHHHHHHP) has biased composition (basic residues). Residues 875-888 (RGTRSGHDSIKQEA) show a composition bias toward basic and acidic residues. The segment covering 961 to 970 (SPPSTVSNPA) has biased composition (polar residues). Low complexity predominate over residues 1070–1084 (PVASSPSQAVSAPRT).

It localises to the nucleus. Functionally, involved in the regulation of secreted ferrichrome-type siderophores. Acts directly or indirectly to repress the biosynthesis of siderophores. This Mycosarcoma maydis (Corn smut fungus) protein is Siderophore biosynthesis regulatory protein URBS1 (URBS1).